The following is a 1138-amino-acid chain: Exportin-6-B (1138 aa).

In terms of domain architecture, Importin N-terminal spans 31–97 (IESLLNNFAQ…RSSLPKLLLS (67 aa)). Over residues 291–307 (SVTTNTTSSVVNGGSSS) the composition is skewed to low complexity. The interval 291–315 (SVTTNTTSSVVNGGSSSPPLHSAAP) is disordered.

It belongs to the exportin family.

The protein localises to the nucleus. It localises to the cytoplasm. In terms of biological role, mediates the nuclear export of actin and profilin-actin complexes in somatic cells. Oocyte nuclei lack active actin export. Mediates the nuclear export of actin and profilin-actin complexes in somatic cells. The sequence is that of Exportin-6-B (xpo6-b) from Xenopus laevis (African clawed frog).